Reading from the N-terminus, the 89-residue chain is Small ribosomal subunit protein bS16 (89 aa).

This sequence belongs to the bacterial ribosomal protein bS16 family.

The sequence is that of Small ribosomal subunit protein bS16 from Chloroflexus aurantiacus (strain ATCC 29364 / DSM 637 / Y-400-fl).